The sequence spans 396 residues: Ornithine aminotransferase (396 aa).

At lysine 255 the chain carries N6-(pyridoxal phosphate)lysine.

This sequence belongs to the class-III pyridoxal-phosphate-dependent aminotransferase family. OAT subfamily. It depends on pyridoxal 5'-phosphate as a cofactor.

It localises to the cytoplasm. The catalysed reaction is a 2-oxocarboxylate + L-ornithine = L-glutamate 5-semialdehyde + an L-alpha-amino acid. The protein operates within amino-acid biosynthesis; L-proline biosynthesis; L-glutamate 5-semialdehyde from L-ornithine: step 1/1. In terms of biological role, catalyzes the interconversion of ornithine to glutamate semialdehyde. This chain is Ornithine aminotransferase, found in Bacillus cereus (strain Q1).